The sequence spans 511 residues: Histidine ammonia-lyase (511 aa).

Positions 142-144 (ASG) form a cross-link, 5-imidazolinone (Ala-Gly). Ser143 carries the post-translational modification 2,3-didehydroalanine (Ser).

The protein belongs to the PAL/histidase family. Post-translationally, contains an active site 4-methylidene-imidazol-5-one (MIO), which is formed autocatalytically by cyclization and dehydration of residues Ala-Ser-Gly.

It is found in the cytoplasm. The enzyme catalyses L-histidine = trans-urocanate + NH4(+). Its pathway is amino-acid degradation; L-histidine degradation into L-glutamate; N-formimidoyl-L-glutamate from L-histidine: step 1/3. The sequence is that of Histidine ammonia-lyase from Brucella canis (strain ATCC 23365 / NCTC 10854 / RM-666).